The primary structure comprises 199 residues: Peroxynitrite isomerase (199 aa).

A GXWXGXG motif is present at residues 20–26; the sequence is GVWEGTG. Heme b is bound at residue His-190.

Belongs to the nitrobindin family. As to quaternary structure, homodimer. Heme b is required as a cofactor.

The enzyme catalyses peroxynitrite = nitrate. It participates in nitrogen metabolism. Heme-binding protein able to scavenge peroxynitrite and to protect free L-tyrosine against peroxynitrite-mediated nitration, by acting as a peroxynitrite isomerase that converts peroxynitrite to nitrate. Therefore, this protein likely plays a role in peroxynitrite sensing and in the detoxification of reactive nitrogen and oxygen species (RNS and ROS, respectively). Is able to bind nitric oxide (NO) in vitro, but may act as a sensor of peroxynitrite levels in vivo. The protein is Peroxynitrite isomerase of Clavibacter michiganensis subsp. michiganensis (strain NCPPB 382).